Consider the following 124-residue polypeptide: U13-hexatoxin-Mg1a (124 aa).

The signal sequence occupies residues 1 to 17 (MKLSALVFVASVMLVAA). A propeptide spanning residues 18-52 (SPVKDVEEPVETHLAADLKTIEELAKYEEAAVQKR) is cleaved from the precursor. 4 disulfide bridges follow: C54–C72, C65–C78, C69–C116, and C71–C87.

As to expression, expressed by the venom gland.

The protein resides in the secreted. Functionally, no toxicity is observed upon intracranial injection into mice and intrathorax injection into crickets. The sequence is that of U13-hexatoxin-Mg1a from Macrothele gigas (Japanese funnel web spider).